The sequence spans 81 residues: Cortexin-3 (81 aa).

The chain crosses the membrane as a helical span at residues 29 to 49 (MTFVFVILLFIFLGILIVRCF).

It belongs to the cortexin family.

The protein resides in the membrane. The sequence is that of Cortexin-3 (CTXN3) from Homo sapiens (Human).